The sequence spans 522 residues: MEFPDHSRHLLQCLSEQRHQGFLCDCTVLVGDAQFRAHRAVLASCSMYFHLFYKDQLDKRDIVHLNSDIVTAPAFALLLEFMYEGKLQFKDLPIEDVLAAASYLHMYDIVKVCKKKLKEKATTEADSTKKEEDASSCSDKVESLSDGSSHMAGDLPSDEDEGEDDKLNILPSKRDLAAEPGNMWMRLPSDAAGIPQAGGEAEPHATAAGKTVASPCSSTESLSQRSVTSVRDSADVDCVLDLSVKSSLSGVENLNSSYFSSQDVLRGNLVQVKVEKEASCDESDVGTNDYDMEHSTVKESVSANNRVQYEPAHLAPLREDSVLRELDREDKASDDEMMTPESERVQVEGGMESSLLPYVSNILSPAGQIFMCPLCNKVFPSPHILQIHLSTHFREQDGIRSKPAADVNVPTCSLCGKTFSCMYTLKRHERTHSGEKPYTCTQCGKSFQYSHNLSRHAVVHTREKPHACKWCERRFTQSGDLYRHIRKFHCELVNSLSVKSEALSLPTVRDWTLEDSSQELWR.

Residues 24-91 (CDCTVLVGDA…MYEGKLQFKD (68 aa)) form the BTB domain. Basic and acidic residues predominate over residues 121-143 (ATTEADSTKKEEDASSCSDKVES). Residues 121-166 (ATTEADSTKKEEDASSCSDKVESLSDGSSHMAGDLPSDEDEGEDDK) form a disordered region. Residue S157 is modified to Phosphoserine. A Glycyl lysine isopeptide (Lys-Gly) (interchain with G-Cter in SUMO2) cross-link involves residue K273. Positions 310–427 (EPAHLAPLRE…TFSCMYTLKR (118 aa)) are interaction with DNMT3A. 4 consecutive C2H2-type zinc fingers follow at residues 370–392 (FMCPLCNKVFPSPHILQIHLSTH), 410–432 (PTCSLCGKTFSCMYTLKRHERTH), 438–460 (YTCTQCGKSFQYSHNLSRHAVVH), and 466–489 (HACKWCERRFTQSGDLYRHIRKFH). Phosphoserine is present on residues S516 and S517.

This sequence belongs to the krueppel C2H2-type zinc-finger protein family. ZBTB18 subfamily. Interacts with DNMT3A.

It localises to the nucleus. Its function is as follows. Transcriptional repressor that plays a role in various developmental processes such as myogenesis and brain development. Specifically binds the consensus DNA sequence 5'-[AC]ACATCTG[GT][AC]-3' which contains the E box core, and acts by recruiting chromatin remodeling multiprotein complexes. Plays a key role in myogenesis by directly repressing the expression of ID2 and ID3, 2 inhibitors of skeletal myogenesis. Also involved in controlling cell division of progenitor cells and regulating the survival of postmitotic cortical neurons. May also play a role in the organization of chromosomes in the nucleus. The polypeptide is Zinc finger and BTB domain-containing protein 18 (Zbtb18) (Rattus norvegicus (Rat)).